Reading from the N-terminus, the 27-residue chain is AVDKGGGKAEKKDGNRKKKLAGGEGGG.

The segment covering Ala1–Asp13 has biased composition (basic and acidic residues). Residues Ala1–Gly27 form a disordered region.

The protein resides in the secreted. In terms of biological role, peptide with unknown function. Does not show antimicrobial and hemolytic activities. The sequence is that of Equinin A from Actinia equina (Beadlet anemone).